A 419-amino-acid polypeptide reads, in one-letter code: Histidine--tRNA ligase (419 aa).

This sequence belongs to the class-II aminoacyl-tRNA synthetase family.

It localises to the cytoplasm. The enzyme catalyses tRNA(His) + L-histidine + ATP = L-histidyl-tRNA(His) + AMP + diphosphate + H(+). This is Histidine--tRNA ligase from Pyrobaculum arsenaticum (strain DSM 13514 / JCM 11321 / PZ6).